The primary structure comprises 210 residues: dTTP/UTP pyrophosphatase (210 aa).

Aspartate 89 acts as the Proton acceptor in catalysis.

This sequence belongs to the Maf family. YhdE subfamily. The cofactor is a divalent metal cation.

It localises to the cytoplasm. The catalysed reaction is dTTP + H2O = dTMP + diphosphate + H(+). It carries out the reaction UTP + H2O = UMP + diphosphate + H(+). Its function is as follows. Nucleoside triphosphate pyrophosphatase that hydrolyzes dTTP and UTP. May have a dual role in cell division arrest and in preventing the incorporation of modified nucleotides into cellular nucleic acids. The polypeptide is dTTP/UTP pyrophosphatase (Burkholderia orbicola (strain AU 1054)).